The following is a 236-amino-acid chain: LexA repressor (236 aa).

The segment at residues 26 to 46 is a DNA-binding region (H-T-H motif); sequence FDEMKEALDLRSKSGIHRLIT. Residues S157 and K195 each act as for autocatalytic cleavage activity in the active site.

The protein belongs to the peptidase S24 family. As to quaternary structure, homodimer.

It catalyses the reaction Hydrolysis of Ala-|-Gly bond in repressor LexA.. In terms of biological role, represses a number of genes involved in the response to DNA damage (SOS response), including recA and lexA. In the presence of single-stranded DNA, RecA interacts with LexA causing an autocatalytic cleavage which disrupts the DNA-binding part of LexA, leading to derepression of the SOS regulon and eventually DNA repair. The sequence is that of LexA repressor from Azorhizobium caulinodans (strain ATCC 43989 / DSM 5975 / JCM 20966 / LMG 6465 / NBRC 14845 / NCIMB 13405 / ORS 571).